Reading from the N-terminus, the 1854-residue chain is PKS-NRPS hybrid synthetase ATPKS (1854 aa).

The adenylation (A) domain stretch occupies residues 24–423 (FDQTQTRYSP…GRADTQIKIR (400 aa)). Residues 523–598 (IPASTLTQQL…NLAAYLSDQT (76 aa)) enclose the Carrier 1 domain. S558 bears the O-(pantetheine 4'-phosphoryl)serine mark. Residues 617–1049 (GEDIAVISMA…GTNAHAIIEE (433 aa)) enclose the Ketosynthase family 3 (KS3) domain. Catalysis depends on for beta-ketoacyl synthase activity residues C791, H926, and H967. The tract at residues 1162–1496 (LFSGQGTERA…SLSDLHIRKV (335 aa)) is malonyl-CoA:ACP transacylase (MAT) domain. The tract at residues 1536 to 1556 (KSSGQPSGQSPSGCPQPTGQI) is disordered. A compositionally biased stretch (low complexity) spans 1537–1555 (SSGQPSGQSPSGCPQPTGQ). A Carrier 2 domain is found at 1776–1851 (MMLQGLVRGI…SLSDALQKQV (76 aa)). Residue S1811 is modified to O-(pantetheine 4'-phosphoryl)serine.

It in the C-terminal section; belongs to the NRP synthetase family.

Its pathway is secondary metabolite biosynthesis. Functionally, PKS-NRPS hybrid synthetase; part of the gene cluster that mediates the biosynthesis of pyrophen and campyrone B, which represent a class of fungal amino acid-derived alpha-pyrone natural products. The first step of pyrophen biosynthesis is catalyzed by the PKS-NRPS hybrid synthetase ATPKS that uptakes and condensates L-phenylalanine and malonyl-CoA in order to produce desmethyldesacetylpyrophen. Although the A domain does not discriminate between 2 enantiomeric phenylalanines, the downstream KS domain must play a gate keeping role to stereoselectively accept the L-phenylalanyl-S-phosphopantetheine (Ppant)-T domain intermediate for chain elongation. The resulting amino acid derived diketide is off-loaded through lactonization to yield the alpha-pyrone intermediate desmethyldesacetylpyrophen. The cluster-specific O-methyltransferase (OMT) then methylates desmethyldesacetylpyrophen to desacetylpyrophen, which is further acetylated to pyrophen by an endogenous yet unidentified N-acetyltransferase. ATPKS has relaxed substrate specificity to activate and extend branched-chain amino acid L-leucine to produce small amounts of campyrone B. In Aspergillus niger (strain ATCC 1015 / CBS 113.46 / FGSC A1144 / LSHB Ac4 / NCTC 3858a / NRRL 328 / USDA 3528.7), this protein is PKS-NRPS hybrid synthetase ATPKS.